We begin with the raw amino-acid sequence, 135 residues long: Phosphoinositide-interacting protein (135 aa).

Positions 1-21 are disordered; it reads MEVLPKALEVDERSPESKDLL. Positions 8 to 19 are enriched in basic and acidic residues; it reads LEVDERSPESKD. 2 helical membrane-spanning segments follow: residues 54 to 74 and 92 to 112; these read IIIMSVGAAILLFGVAITCVA and PAFLSLGLMMLVCGLVWVPII.

Interacts with TRPV1. As to expression, strongly expressed in most dorsal root ganglia (DRG) and trigeminal neurons. Expressed by most peptidergic (CGRP+) and non-peptidergic (IB4+) DRG neurons. Weakly expressed in other parts of the peripheral nervous system (PNS) including sympathetic and enteric neurons. Not expressed in the spinal cord.

The protein localises to the membrane. Its function is as follows. Regulatory subunit of TRPV1, a molecular sensor of noxious heat and capsaicin. Positively regulates TRPV1 channel activity via phosphatidylinositol 4,5-bisphosphate (PIP2). Binds various phosphoinositide, including phosphatidylinositol 4,5-bisphosphate (PIP2), but not phosphatidylinositol (PI). The polypeptide is Phosphoinositide-interacting protein (Pirt) (Mus musculus (Mouse)).